Consider the following 746-residue polypeptide: Polyribonucleotide nucleotidyltransferase (746 aa).

Residues Asp-515 and Asp-521 each coordinate Mg(2+). Residues Pro-581–Ile-640 form the KH domain. Positions Gly-652–Val-724 constitute an S1 motif domain.

It belongs to the polyribonucleotide nucleotidyltransferase family. It depends on Mg(2+) as a cofactor.

It is found in the cytoplasm. It catalyses the reaction RNA(n+1) + phosphate = RNA(n) + a ribonucleoside 5'-diphosphate. Involved in mRNA degradation. Catalyzes the phosphorolysis of single-stranded polyribonucleotides processively in the 3'- to 5'-direction. The polypeptide is Polyribonucleotide nucleotidyltransferase (Renibacterium salmoninarum (strain ATCC 33209 / DSM 20767 / JCM 11484 / NBRC 15589 / NCIMB 2235)).